Here is a 502-residue protein sequence, read N- to C-terminus: Xyloglucan-specific endo-beta-1,4-glucanase BoGH5A (502 aa).

A signal peptide spans 1–32 (MEKQSFSDGLFSPLGIKRVIFMLVLLTTSFIS). Cys33 is lipidated: N-palmitoyl cysteine. Cys33 is lipidated: S-diacylglycerol cysteine. The BACON domain maps to 67-127 (GPAEWHISTS…PDIIINVKQS (61 aa)). Residues Asn165, Val172, His251, and Asn296 each coordinate substrate. Glu297 serves as the catalytic Proton donor. Glu430 functions as the Nucleophile in the catalytic mechanism. Residue Trp472 coordinates substrate.

This sequence belongs to the glycosyl hydrolase 5 (cellulase A) family.

The protein resides in the cell outer membrane. The enzyme catalyses xyloglucan + H2O = xyloglucan oligosaccharides.. The protein operates within glucan metabolism; xyloglucan degradation. In terms of biological role, catalyzes endohydrolysis of 1,4-beta-D-glucosidic linkages in xyloglucan with retention of the beta-configuration of the glycosyl residues in xyloglucan degradation. Cleaves the backbone of the 3 major types of natural xyloglucans (seed galactoxyloglucan from tamarind kernel, dicot fucogalactoxyloglucan from lettuce leaves, and solanaceous arabinogalactoxyloglucan from tomato fruit), to produce xyloglucan oligosaccharides. In Bacteroides ovatus (strain ATCC 8483 / DSM 1896 / JCM 5824 / BCRC 10623 / CCUG 4943 / NCTC 11153), this protein is Xyloglucan-specific endo-beta-1,4-glucanase BoGH5A.